The chain runs to 129 residues: Small ribosomal subunit protein bS6 (129 aa).

This sequence belongs to the bacterial ribosomal protein bS6 family.

In terms of biological role, binds together with bS18 to 16S ribosomal RNA. The chain is Small ribosomal subunit protein bS6 from Microcystis aeruginosa (strain NIES-843 / IAM M-2473).